The primary structure comprises 287 residues: Thioredoxin-related transmembrane protein 2 (287 aa).

Positions M1–S35 are cleaved as a signal peptide. The Extracellular segment spans residues F36–M112. A helical transmembrane segment spans residues G113–L133. Topologically, residues G134–Q287 are cytoplasmic. The region spanning P135–K269 is the Thioredoxin domain. A Di-lysine motif motif is present at residues K284 to Q287.

Monomer. Homodimer; disulfide-linked. Occurs in both reduced and oxidized monomeric form. Oxidative conditions increase homodimerization.

The protein resides in the endoplasmic reticulum membrane. It is found in the mitochondrion membrane. Functionally, endoplasmic reticulum and mitochondria-associated protein that probably functions as a regulator of cellular redox state and thereby regulates protein post-translational modification, protein folding and mitochondrial activity. This chain is Thioredoxin-related transmembrane protein 2 (tmx2), found in Xenopus tropicalis (Western clawed frog).